A 485-amino-acid polypeptide reads, in one-letter code: T-complex protein 1 subunit theta (485 aa).

Belongs to the TCP-1 chaperonin family. As to quaternary structure, component of the T-complex protein 1 (TCP1) complex.

It localises to the cytoplasm. Functionally, molecular chaperone; assists the folding of proteins upon ATP hydrolysis. In Encephalitozoon cuniculi (strain GB-M1) (Microsporidian parasite), this protein is T-complex protein 1 subunit theta (CCT8).